Here is a 213-residue protein sequence, read N- to C-terminus: Orotate phosphoribosyltransferase (213 aa).

Lys-26 contacts 5-phospho-alpha-D-ribose 1-diphosphate. Residue 34 to 35 (FF) coordinates orotate. 5-phospho-alpha-D-ribose 1-diphosphate-binding positions include 72 to 73 (YK), Arg-99, Lys-100, Lys-103, His-105, and 124 to 132 (DDVITAGTA). Orotate-binding residues include Thr-128 and Arg-156.

It belongs to the purine/pyrimidine phosphoribosyltransferase family. PyrE subfamily. Homodimer. Mg(2+) serves as cofactor.

The catalysed reaction is orotidine 5'-phosphate + diphosphate = orotate + 5-phospho-alpha-D-ribose 1-diphosphate. It participates in pyrimidine metabolism; UMP biosynthesis via de novo pathway; UMP from orotate: step 1/2. Its function is as follows. Catalyzes the transfer of a ribosyl phosphate group from 5-phosphoribose 1-diphosphate to orotate, leading to the formation of orotidine monophosphate (OMP). The sequence is that of Orotate phosphoribosyltransferase from Shigella sonnei (strain Ss046).